The chain runs to 179 residues: Inosine/xanthosine triphosphatase (179 aa).

Residue Glu-71 participates in Mg(2+) binding. Glu-71–Ala-72 is a binding site for substrate.

It belongs to the YjjX NTPase family. Homodimer. It depends on Mg(2+) as a cofactor. The cofactor is Mn(2+).

It carries out the reaction XTP + H2O = XDP + phosphate + H(+). The catalysed reaction is ITP + H2O = IDP + phosphate + H(+). In terms of biological role, phosphatase that hydrolyzes non-canonical purine nucleotides such as XTP and ITP to their respective diphosphate derivatives. Probably excludes non-canonical purines from DNA/RNA precursor pool, thus preventing their incorporation into DNA/RNA and avoiding chromosomal lesions. The sequence is that of Inosine/xanthosine triphosphatase from Shewanella oneidensis (strain ATCC 700550 / JCM 31522 / CIP 106686 / LMG 19005 / NCIMB 14063 / MR-1).